The chain runs to 471 residues: Alpha-galactosidase (471 aa).

The signal sequence occupies residues 1-18; sequence MFNLNFFNYTCHCEWCFW. A disulfide bridge links C42 with C74. Residue N43 is glycosylated (N-linked (GlcNAc...) asparagine). Residues D72 and D73 each contribute to the substrate site. N-linked (GlcNAc...) asparagine glycosylation is present at N105. Residues C121 and C151 are joined by a disulfide bond. K147 lines the substrate pocket. D149 acts as the Nucleophile in catalysis. Residue N175 is glycosylated (N-linked (GlcNAc...) asparagine). R205 contacts substrate. D209 acts as the Proton donor in catalysis. Cystine bridges form between C221-C237 and C223-C230. Q251 serves as a coordination point for substrate. N270, N370, N403, N417, N422, and N454 each carry an N-linked (GlcNAc...) asparagine glycan.

It belongs to the glycosyl hydrolase 27 family. As to quaternary structure, homotetramer.

The protein localises to the secreted. The catalysed reaction is Hydrolysis of terminal, non-reducing alpha-D-galactose residues in alpha-D-galactosides, including galactose oligosaccharides, galactomannans and galactolipids.. The sequence is that of Alpha-galactosidase (MEL) from Saccharomyces paradoxus (Yeast).